The chain runs to 389 residues: Flap endonuclease 1 (389 aa).

The segment at Met-1–Arg-110 is N-domain. Asp-35 contacts Mg(2+). Arg-48 and Arg-76 together coordinate DNA. Mg(2+) is bound at residue Asp-92. Residues Leu-103–Gly-124 are disordered. Positions Asp-128 to His-259 are I-domain. Mg(2+) is bound by residues Glu-164, Glu-166, Asp-185, and Asp-187. Glu-164 is a binding site for DNA. 2 residues coordinate DNA: Gly-237 and Asp-239. Asp-239 is a binding site for Mg(2+). The tract at residues Ser-350–Phe-358 is interaction with PCNA. The interval Pro-362–Lys-389 is disordered. A compositionally biased stretch (basic residues) spans Ala-367–Lys-389.

This sequence belongs to the XPG/RAD2 endonuclease family. FEN1 subfamily. Interacts with PCNA. Three molecules of FEN1 bind to one PCNA trimer with each molecule binding to one PCNA monomer. PCNA stimulates the nuclease activity without altering cleavage specificity. Requires Mg(2+) as cofactor. Phosphorylated. Phosphorylation upon DNA damage induces relocalization to the nuclear plasma.

The protein resides in the nucleus. It localises to the nucleolus. The protein localises to the nucleoplasm. It is found in the mitochondrion. In terms of biological role, structure-specific nuclease with 5'-flap endonuclease and 5'-3' exonuclease activities involved in DNA replication and repair. During DNA replication, cleaves the 5'-overhanging flap structure that is generated by displacement synthesis when DNA polymerase encounters the 5'-end of a downstream Okazaki fragment. It enters the flap from the 5'-end and then tracks to cleave the flap base, leaving a nick for ligation. Also involved in the long patch base excision repair (LP-BER) pathway, by cleaving within the apurinic/apyrimidinic (AP) site-terminated flap. Acts as a genome stabilization factor that prevents flaps from equilibrating into structures that lead to duplications and deletions. Also possesses 5'-3' exonuclease activity on nicked or gapped double-stranded DNA, and exhibits RNase H activity. Also involved in replication and repair of rDNA and in repairing mitochondrial DNA. This chain is Flap endonuclease 1, found in Phytophthora infestans (strain T30-4) (Potato late blight agent).